A 1125-amino-acid chain; its full sequence is Phytochrome A (1125 aa).

Low complexity-rich tracts occupy residues 1 to 14 (MSSS…SNSA) and 39 to 48 (SGSSFDYSSS). Disordered regions lie at residues 1-22 (MSSS…SARI) and 38-64 (ESGS…PRSD). In terms of domain architecture, GAF spans 218–401 (SMERLCDTMV…VFAIHVNKEL (184 aa)). Residue Cys323 participates in phytochromobilin binding. PAS domains are found at residues 617–687 (VTSE…LQGK) and 750–821 (DYKA…VNLG). In terms of domain architecture, Histidine kinase spans 901-1117 (YLKKQIWNPL…SFIISVELAG (217 aa)).

Belongs to the phytochrome family. In terms of assembly, homodimer. In terms of processing, contains one covalently linked phytochromobilin chromophore.

In terms of biological role, regulatory photoreceptor which exists in two forms that are reversibly interconvertible by light: the Pr form that absorbs maximally in the red region of the spectrum and the Pfr form that absorbs maximally in the far-red region. Photoconversion of Pr to Pfr induces an array of morphogenic responses, whereas reconversion of Pfr to Pr cancels the induction of those responses. Pfr controls the expression of a number of nuclear genes including those encoding the small subunit of ribulose-bisphosphate carboxylase, chlorophyll A/B binding protein, protochlorophyllide reductase, rRNA, etc. It also controls the expression of its own gene(s) in a negative feedback fashion. In Populus tremuloides (Quaking aspen), this protein is Phytochrome A (PHYA).